We begin with the raw amino-acid sequence, 546 residues long: Cytokine-like nuclear factor N-PAC (546 aa).

One can recognise a PWWP domain in the interval 8–66 (LGDLVWGKLGRYPPWPGKIVNPPKDLKKPRGKKCFFVKFFGTEDHAWIKVEQLKPYHAH). 2 stretches are compositionally biased toward basic and acidic residues: residues 91–145 (RRAK…EGKK) and 161–181 (RAQE…KDLT). The interval 91–187 (RRAKGKDQTS…KDLTIPESST (97 aa)) is disordered. Ser-130 is subject to Phosphoserine. A Glycyl lysine isopeptide (Lys-Gly) (interchain with G-Cter in SUMO2) cross-link involves residue Lys-135. Ser-166 carries the phosphoserine modification. The a.T hook DNA-binding region spans 167-179 (PRKRGRPPKDEKD). Residues Lys-175, Lys-178, Lys-200, and Lys-210 each participate in a glycyl lysine isopeptide (Lys-Gly) (interchain with G-Cter in SUMO2) cross-link. An interaction with histone H3 region spans residues 213 to 216 (DPHF). The tract at residues 215–224 (HFHHFLLSQT) is interaction with KDM1B. Residues Lys-226, Lys-236, Lys-239, and Lys-268 each participate in a glycyl lysine isopeptide (Lys-Gly) (interchain with G-Cter in SUMO2) cross-link. The interval 260 to 546 (GSITPTDKKI…MSAVYRAYIH (287 aa)) is dehydrogenase domain. 270–284 (GFLGLGLMGSGIVSN) contacts NAD(+). Lys-301 participates in a covalent cross-link: Glycyl lysine isopeptide (Lys-Gly) (interchain with G-Cter in SUMO2). NAD(+) is bound by residues Thr-355 and Lys-498. Ser-533 is modified (phosphoserine).

The protein belongs to the HIBADH-related family. NP60 subfamily. In terms of assembly, homotetramere. Interacts with MAPK14. Interacts with KDM1B at nucleosomes; this interaction stimulates H3K4me1 and H3K4me2 demethylation. Binds to mononucleosomes. Interacts with GATA4; the interaction is required for a synergistic activation of GATA4 target genes transcription.

Its subcellular location is the nucleus. It is found in the chromosome. Functionally, cytokine-like nuclear factor with chromatin gene reader activity involved in chromatin modification and regulation of gene expression. Acts as a nucleosome-destabilizing factor that is recruited to genes during transcriptional activation. Recognizes and binds histone H3 without a preference for specific epigenetic markers and also binds DNA. Interacts with KDM1B and promotes its histone demethylase activity by facilitating the capture of H3 tails, they form a multifunctional enzyme complex that modifies transcribed chromatin and facilitates Pol II transcription through nucleosomes. Stimulates the acetylation of 'Lys-56' of nucleosomal histone H3 (H3K56ac) by EP300. With GATA4, co-binds a defined set of heart development genes and coregulates their expression during cardiomyocyte differentiation. Regulates p38 MAP kinase activity by mediating stress activation of MAPK14/p38alpha and specifically regulating MAPK14 signaling. Indirectly promotes phosphorylation of MAPK14 and activation of ATF2. The phosphorylation of MAPK14 requires upstream activity of MAP2K4 and MAP2K6. The chain is Cytokine-like nuclear factor N-PAC from Mus musculus (Mouse).